A 112-amino-acid polypeptide reads, in one-letter code: Putative pterin-4-alpha-carbinolamine dehydratase (112 aa).

This sequence belongs to the pterin-4-alpha-carbinolamine dehydratase family.

It carries out the reaction (4aS,6R)-4a-hydroxy-L-erythro-5,6,7,8-tetrahydrobiopterin = (6R)-L-erythro-6,7-dihydrobiopterin + H2O. This chain is Putative pterin-4-alpha-carbinolamine dehydratase, found in Shewanella frigidimarina (strain NCIMB 400).